The sequence spans 486 residues: MTLTIYNTLTRRQEPLETVEPGKVKMYCCGVTVYDYCHLGHARSYIVWDTIRRYLIWRGFGVKYIQNFTDIDDKILNRAKEQGLTMAEVSNRFIDAYFADIRRLNVLDADEYPRVTEHIPEIHQLIQILEEKGLAYAVGGDVYYRVERFPSYGKLSGRELEQMQAGASGRVDAEDSEPKKQHPFDFALWKAAKPGEPAWDSPWGAGRPGWHIECSAMIRSKLGATIDIHGGGGDLIFPHHENEIAQSEAAMNQPLARYWTHNGMVMVNGQKMSKSLGNFITIRELLDGVGSWKEDPVNPMAVRLFVLQAHYRKPLDFTEEAIATAENSWKTLKEGLLFGYQYGEKLGWGQESAIIPELATRFQELGDDDFNFSGGLAVLFELAKELRREGNILVHEGTTKTPSDELQRQWNTLVTLAKILGLEAKLDDETQTQAGLSDTDIEALIEQRQAARKNKNFSESDRIRNELQAQGVTLIDSPQGTRWHRS.

C29 is a Zn(2+) binding site. Residues 31–41 (VTVYDYCHLGH) carry the 'HIGH' region motif. Zn(2+) is bound by residues C214, H239, and E243. A 'KMSKS' region motif is present at residues 271–275 (KMSKS). ATP is bound at residue K274.

Belongs to the class-I aminoacyl-tRNA synthetase family. In terms of assembly, monomer. It depends on Zn(2+) as a cofactor.

The protein localises to the cytoplasm. It carries out the reaction tRNA(Cys) + L-cysteine + ATP = L-cysteinyl-tRNA(Cys) + AMP + diphosphate. This chain is Cysteine--tRNA ligase, found in Nostoc sp. (strain PCC 7120 / SAG 25.82 / UTEX 2576).